Reading from the N-terminus, the 195-residue chain is Molybdenum cofactor guanylyltransferase (195 aa).

GTP-binding positions include 10-12, Lys23, Asn51, Asp69, and Asp99; that span reads LAG. Asp99 provides a ligand contact to Mg(2+).

The protein belongs to the MobA family. As to quaternary structure, monomer. Requires Mg(2+) as cofactor.

It is found in the cytoplasm. It catalyses the reaction Mo-molybdopterin + GTP + H(+) = Mo-molybdopterin guanine dinucleotide + diphosphate. Transfers a GMP moiety from GTP to Mo-molybdopterin (Mo-MPT) cofactor (Moco or molybdenum cofactor) to form Mo-molybdopterin guanine dinucleotide (Mo-MGD) cofactor. In Histophilus somni (strain 129Pt) (Haemophilus somnus), this protein is Molybdenum cofactor guanylyltransferase.